Consider the following 222-residue polypeptide: Interleukin-12 subunit alpha (222 aa).

A signal peptide spans 1 to 25 (MCPLRSLFLMATLVFLNHLDHLSLA). Cystine bridges form between cysteine 40/cysteine 113, cysteine 67/cysteine 199, and cysteine 88/cysteine 126. Residues asparagine 96 and asparagine 174 are each glycosylated (N-linked (GlcNAc...) asparagine).

Belongs to the IL-6 superfamily. Heterodimer with IL12B; disulfide-linked. This heterodimer is known as interleukin IL-12. Heterodimer with EBI3/IL27B; not disulfide-linked. This heterodimer is known as interleukin IL-35. Interacts with NBR1; this interaction promotes IL-12 secretion.

The protein resides in the secreted. Functionally, heterodimerizes with IL12B to form the IL-12 cytokine or with EBI3/IL27B to form the IL-35 cytokine. IL-12 is primarily produced by professional antigen-presenting cells (APCs) such as B-cells and dendritic cells (DCs) as well as macrophages and granulocytes and regulates T-cell and natural killer-cell responses, induces the production of interferon-gamma (IFN-gamma), favors the differentiation of T-helper 1 (Th1) cells and is an important link between innate resistance and adaptive immunity. Mechanistically, exerts its biological effects through a receptor composed of IL12R1 and IL12R2 subunits. Binding to the receptor results in the rapid tyrosine phosphorylation of a number of cellular substrates including the JAK family kinases TYK2 and JAK2. In turn, recruited STAT4 gets phosphorylated and translocates to the nucleus where it regulates cytokine/growth factor responsive genes. As part of IL-35, plays essential roles in maintaining the immune homeostasis of the liver microenvironment and also functions as an immune-suppressive cytokine. Mediates biological events through unconventional receptors composed of IL12RB2 and gp130/IL6ST heterodimers or homodimers. Signaling requires the transcription factors STAT1 and STAT4, which form a unique heterodimer that binds to distinct DNA sites. This Lama glama (Llama) protein is Interleukin-12 subunit alpha (IL12A).